Reading from the N-terminus, the 351-residue chain is UDP-3-O-acylglucosamine N-acyltransferase (351 aa).

His240 (proton acceptor) is an active-site residue.

This sequence belongs to the transferase hexapeptide repeat family. LpxD subfamily. Homotrimer.

The catalysed reaction is a UDP-3-O-[(3R)-3-hydroxyacyl]-alpha-D-glucosamine + a (3R)-hydroxyacyl-[ACP] = a UDP-2-N,3-O-bis[(3R)-3-hydroxyacyl]-alpha-D-glucosamine + holo-[ACP] + H(+). It functions in the pathway bacterial outer membrane biogenesis; LPS lipid A biosynthesis. Its function is as follows. Catalyzes the N-acylation of UDP-3-O-acylglucosamine using 3-hydroxyacyl-ACP as the acyl donor. Is involved in the biosynthesis of lipid A, a phosphorylated glycolipid that anchors the lipopolysaccharide to the outer membrane of the cell. In Pseudomonas entomophila (strain L48), this protein is UDP-3-O-acylglucosamine N-acyltransferase.